The following is a 546-amino-acid chain: Chaperonin GroEL (546 aa).

ATP contacts are provided by residues 29–32 (TLGP), lysine 50, 86–90 (DGTTT), glycine 414, 478–480 (NAA), and aspartate 494.

It belongs to the chaperonin (HSP60) family. Forms a cylinder of 14 subunits composed of two heptameric rings stacked back-to-back. Interacts with the co-chaperonin GroES.

It localises to the cytoplasm. It catalyses the reaction ATP + H2O + a folded polypeptide = ADP + phosphate + an unfolded polypeptide.. Functionally, together with its co-chaperonin GroES, plays an essential role in assisting protein folding. The GroEL-GroES system forms a nano-cage that allows encapsulation of the non-native substrate proteins and provides a physical environment optimized to promote and accelerate protein folding. This chain is Chaperonin GroEL, found in Psychrobacter arcticus (strain DSM 17307 / VKM B-2377 / 273-4).